The sequence spans 295 residues: MDPMITGLGVVALMGAAATIAGAAEDLESDVGSQSNPNSQVQLAPQMGHLHRIINKAVSGEPVAYGTWCGIAGSVAYVLMQSMQLPVIMAIAVGAVIAAMVHTTYAVTSHMGRIVSQSQFNQPLFMDMLVQHLGPIAGHGFIVTFCIVGLSYLMTLPIPGFAHPFPLPLLAVLWGITIGAIGSSTGDVHYGAEREYQQYPFGGGIPVAIHGDITTKAELGARNSMDVVHFCAKYGGPLTGFAFGAIVFLSFWNTIVFGITGGIISGLIIVLLLIILNNRLEVFARNRYGPYKEDE.

7 helical membrane passes run 4 to 24, 60 to 80, 87 to 107, 140 to 160, 161 to 181, 234 to 254, and 255 to 275; these read MITG…AGAA, GEPV…YVLM, VIMA…TYAV, GFIV…PIPG, FAHP…IGAI, YGGP…FWNT, and IVFG…LLII.

Belongs to the MtrE family. In terms of assembly, the complex is composed of 8 subunits; MtrA, MtrB, MtrC, MtrD, MtrE, MtrF, MtrG and MtrH.

Its subcellular location is the cell membrane. The enzyme catalyses 5-methyl-5,6,7,8-tetrahydromethanopterin + coenzyme M + 2 Na(+)(in) = 5,6,7,8-tetrahydromethanopterin + methyl-coenzyme M + 2 Na(+)(out). The protein operates within one-carbon metabolism; methanogenesis from CO(2); methyl-coenzyme M from 5,10-methylene-5,6,7,8-tetrahydromethanopterin: step 2/2. Functionally, part of a complex that catalyzes the formation of methyl-coenzyme M and tetrahydromethanopterin from coenzyme M and methyl-tetrahydromethanopterin. This is an energy-conserving, sodium-ion translocating step. This Methanothermobacter thermautotrophicus (strain ATCC 29096 / DSM 1053 / JCM 10044 / NBRC 100330 / Delta H) (Methanobacterium thermoautotrophicum) protein is Tetrahydromethanopterin S-methyltransferase subunit E (mtrE).